Consider the following 885-residue polypeptide: Conidiophore development regulator abaA (885 aa).

Residues 1–20 (MSSLFQPRPVLSSQRYSQSP) are compositionally biased toward polar residues. Residues 1–25 (MSSLFQPRPVLSSQRYSQSPDYVDT) are disordered. Residues 124–217 (QKDKGGVWRR…QVVKKFFEDL (94 aa)) constitute a DNA-binding region (TEA). Disordered stretches follow at residues 502 to 539 (KEKR…WTRR) and 817 to 885 (APGS…TAGW). 2 stretches are compositionally biased toward basic and acidic residues: residues 508-521 (YADG…ERAG) and 831-840 (VESHAGDHHG).

Belongs to the TEC1 family.

The protein localises to the nucleus. In terms of biological role, brlA, abaA and wetA are pivotal regulators of conidiophore development and conidium maturation. They act individually and together to regulate their own expression and that of numerous other sporulation-specific genes. BrlA, abaA and wetA act together to positively regulate the expression of the Pks1 gene cluster that mediates the biosynthesis of an anthraquinone derivative pigment that contributes to conidial pigmentation that provides protection from UV radiation, heat and cold stress. This is Conidiophore development regulator abaA from Metarhizium robertsii (strain ARSEF 23 / ATCC MYA-3075) (Metarhizium anisopliae (strain ARSEF 23)).